Consider the following 346-residue polypeptide: Biotin synthase (346 aa).

Positions 36–265 constitute a Radical SAM core domain; that stretch reads YFGRQVMLHR…KAEIRIGGGR (230 aa). The [4Fe-4S] cluster site is built by Cys54, Cys58, and Cys61. Residues Cys98, Cys130, Cys190, and Arg260 each coordinate [2Fe-2S] cluster.

The protein belongs to the radical SAM superfamily. Biotin synthase family. Homodimer. The cofactor is [4Fe-4S] cluster. Requires [2Fe-2S] cluster as cofactor.

The enzyme catalyses (4R,5S)-dethiobiotin + (sulfur carrier)-SH + 2 reduced [2Fe-2S]-[ferredoxin] + 2 S-adenosyl-L-methionine = (sulfur carrier)-H + biotin + 2 5'-deoxyadenosine + 2 L-methionine + 2 oxidized [2Fe-2S]-[ferredoxin]. It participates in cofactor biosynthesis; biotin biosynthesis; biotin from 7,8-diaminononanoate: step 2/2. In terms of biological role, catalyzes the conversion of dethiobiotin (DTB) to biotin by the insertion of a sulfur atom into dethiobiotin via a radical-based mechanism. This chain is Biotin synthase, found in Acaryochloris marina (strain MBIC 11017).